Reading from the N-terminus, the 339-residue chain is DNA-directed RNA polymerase subunit alpha (339 aa).

The segment at 1–233 is alpha N-terminal domain (alpha-NTD); that stretch reads MVREEVAGST…DLFLPFLHAE (233 aa). The tract at residues 264 to 339 is alpha C-terminal domain (alpha-CTD); the sequence is KKGIPLNCIF…IDLLKNKLSF (76 aa).

This sequence belongs to the RNA polymerase alpha chain family. As to quaternary structure, in plastids the minimal PEP RNA polymerase catalytic core is composed of four subunits: alpha, beta, beta', and beta''. When a (nuclear-encoded) sigma factor is associated with the core the holoenzyme is formed, which can initiate transcription.

It is found in the plastid. Its subcellular location is the chloroplast. It carries out the reaction RNA(n) + a ribonucleoside 5'-triphosphate = RNA(n+1) + diphosphate. Functionally, DNA-dependent RNA polymerase catalyzes the transcription of DNA into RNA using the four ribonucleoside triphosphates as substrates. The chain is DNA-directed RNA polymerase subunit alpha from Heteranthelium piliferum (Elymus pilifer).